Consider the following 271-residue polypeptide: Arginine and glutamate-rich protein 1 (271 aa).

Basic residues-rich tracts occupy residues M1–S29 and V37–S58. The interval M1 to R72 is necessary and sufficient for RNA binding. Positions M1–R112 are disordered. 2 positions are modified to phosphoserine: S58 and S60. T61 carries the post-translational modification Phosphothreonine. 2 stretches are compositionally biased toward basic and acidic residues: residues S66 to I82 and S91 to R112. Positions A73 to D271 are necessary and sufficient for transcriptional regulation. S74 and S75 each carry phosphoserine. The short motif at L170 to L174 is the LXXLL motif 1; degenerate element. Residues L199–L203 carry the LXXLL motif 2; degenerate motif. Residues M236–K251 are compositionally biased toward basic and acidic residues. The disordered stretch occupies residues M236–D271. Residue S264 is modified to Phosphoserine.

This sequence belongs to the ARGLU1 family. In terms of assembly, interacts with MED1; the interaction is direct. Interacts with PUF60, U2AF2 and JMJD6; may interact with other proteins involved in RNA processing and splicing. In terms of tissue distribution, high expression levels in the neocortex, hippocampus and thalamus but low expression levels in the midbrain and hindbrain (at protein level). Ubiquitously expressed with highest expression levels in the central nervous system and low expression in uterus and pancreas.

The protein localises to the nucleus. The protein resides in the nucleus speckle. It is found in the chromosome. In terms of biological role, dual function regulator of gene expression; regulator of transcription and modulator of alternative splicing. General coactivator of nuclear receptor-induced gene expression, including genes activated by the glucocorticoid receptor NR3C1. Binds to a subset of pre-mRNAs and to components of the spliceosome machinery to directly modulate basal alternative splicing; involved in simple and complex cassette exon splicing events. Binds its own pre-mRNA and regulates its alternative splicing and degradation; one of the alternatively spliced products is a stable intronic sequence RNA (sisRNA) that binds the protein to regulate its ability to affect splicing. Binding of the sisRNA stimulates phase separation and localization to nuclear speckles, which may contribute to activation of nuclear receptor-induced gene expression. May also indirectly modulate alternative splicing. Regulates transcription of genes involved in heart development, neuronal cell function, protein localization and chromatin localization. Regulates splicing of genes involved in neurogenesis and chromatin organization. Essential for central nervous system development. Required for the estrogen-dependent expression of ESR1 target genes. Can act in cooperation with MED1. This is Arginine and glutamate-rich protein 1 (Arglu1) from Mus musculus (Mouse).